Reading from the N-terminus, the 562-residue chain is Delta-1-pyrroline-5-carboxylate dehydrogenase, mitochondrial (562 aa).

The N-terminal 23 residues, 1–23 (MLPLPSLRRSLLSHAWRGAGLRW), are a transit peptide targeting the mitochondrion. At lysine 30 the chain carries N6-succinyllysine. Residue serine 43 is modified to Phosphoserine. Position 51 is an N6-acetyllysine (lysine 51). 5 positions are modified to N6-acetyllysine; alternate: lysine 92, lysine 98, lysine 113, lysine 129, and lysine 174. An N6-succinyllysine; alternate mark is found at lysine 92, lysine 98, lysine 113, lysine 129, and lysine 174. Residues serine 207, lysine 232, and 285–289 (GSVPT) contribute to the NAD(+) site. Glutamate 313 functions as the Proton acceptor in the catalytic mechanism. At lysine 317 the chain carries N6-acetyllysine. Lysine 346 carries the N6-succinyllysine modification. Cysteine 347 serves as the catalytic Nucleophile. Lysine 357 carries the post-translational modification N6-acetyllysine; alternate. An N6-succinyllysine; alternate modification is found at lysine 357. N6-acetyllysine occurs at positions 364 and 375. At lysine 394 the chain carries N6-succinyllysine. Residue glutamate 446 coordinates NAD(+). Lysine 461 is subject to N6-acetyllysine. N6-acetyllysine; alternate is present on lysine 508. Lysine 508 is subject to N6-succinyllysine; alternate. A substrate-binding site is contributed by serine 512. Lysine 530 and lysine 551 each carry N6-acetyllysine.

The protein belongs to the aldehyde dehydrogenase family. As to quaternary structure, homodimer. Post-translationally, acetylation of Lys-98, Lys-113 and Lys-401 is observed in liver mitochondria from fasted mice but not from fed mice.

The protein localises to the mitochondrion matrix. It carries out the reaction L-glutamate 5-semialdehyde + NAD(+) + H2O = L-glutamate + NADH + 2 H(+). It participates in amino-acid degradation; L-proline degradation into L-glutamate; L-glutamate from L-proline: step 2/2. Irreversible conversion of delta-1-pyrroline-5-carboxylate (P5C), derived either from proline or ornithine, to glutamate. This is a necessary step in the pathway interconnecting the urea and tricarboxylic acid cycles. The preferred substrate is glutamic gamma-semialdehyde, other substrates include succinic, glutaric and adipic semialdehydes. In Mus musculus (Mouse), this protein is Delta-1-pyrroline-5-carboxylate dehydrogenase, mitochondrial (Aldh4a1).